Here is a 451-residue protein sequence, read N- to C-terminus: uncharacterized protein (451 aa).

In terms of domain architecture, HD spans 50 to 147 (RFEHSLGTMF…DVDADRMDYL (98 aa)).

This is an uncharacterized protein from Methanocaldococcus jannaschii (strain ATCC 43067 / DSM 2661 / JAL-1 / JCM 10045 / NBRC 100440) (Methanococcus jannaschii).